Reading from the N-terminus, the 500-residue chain is Histidine--tRNA ligase (500 aa).

This sequence belongs to the class-II aminoacyl-tRNA synthetase family. Homodimer.

The protein localises to the cytoplasm. The catalysed reaction is tRNA(His) + L-histidine + ATP = L-histidyl-tRNA(His) + AMP + diphosphate + H(+). In Mesorhizobium japonicum (strain LMG 29417 / CECT 9101 / MAFF 303099) (Mesorhizobium loti (strain MAFF 303099)), this protein is Histidine--tRNA ligase (hisS).